The sequence spans 1567 residues: Ice nucleation protein (1567 aa).

Low complexity predominate over residues P130–A185. Disordered stretches follow at residues P130–D195, Y270–D329, A356–V378, T449–I474, S502–T529, Q594–A620, Q642–A668, T689–A716, Q738–A764, T785–I810, T833–A860, T929–G959, and T977–A1004. Residues Y270–L282 are compositionally biased toward polar residues. Over residues T283–S296 the composition is skewed to low complexity. Polar residues-rich tracts occupy residues Y302 to R325, A356 to R373, T449 to R469, and S502 to D519. The segment covering S520 to T529 has biased composition (low complexity). Polar residues-rich tracts occupy residues Q594–R613, Q642–R661, T689–R709, Q738–R757, T785–R805, T833–R853, T929–R949, and T977–R997.

This sequence belongs to the bacterial ice nucleation protein family.

It is found in the cell outer membrane. Functionally, ice nucleation proteins enable bacteria to nucleate crystallization in supercooled water. This chain is Ice nucleation protein (inaX), found in Xanthomonas campestris pv. translucens.